The following is a 329-amino-acid chain: 4-hydroxy-3-methylbut-2-enyl diphosphate reductase (329 aa).

Cys-27 is a [4Fe-4S] cluster binding site. His-56 and His-89 together coordinate (2E)-4-hydroxy-3-methylbut-2-enyl diphosphate. Dimethylallyl diphosphate is bound by residues His-56 and His-89. 2 residues coordinate isopentenyl diphosphate: His-56 and His-89. Cys-111 is a binding site for [4Fe-4S] cluster. His-139 provides a ligand contact to (2E)-4-hydroxy-3-methylbut-2-enyl diphosphate. His-139 lines the dimethylallyl diphosphate pocket. His-139 is an isopentenyl diphosphate binding site. The active-site Proton donor is the Glu-141. A (2E)-4-hydroxy-3-methylbut-2-enyl diphosphate-binding site is contributed by Thr-179. Cys-209 serves as a coordination point for [4Fe-4S] cluster. (2E)-4-hydroxy-3-methylbut-2-enyl diphosphate contacts are provided by Ser-237, Ser-238, Asn-239, and Ser-281. Dimethylallyl diphosphate contacts are provided by Ser-237, Ser-238, Asn-239, and Ser-281. Residues Ser-237, Ser-238, Asn-239, and Ser-281 each coordinate isopentenyl diphosphate.

This sequence belongs to the IspH family. It depends on [4Fe-4S] cluster as a cofactor.

It carries out the reaction isopentenyl diphosphate + 2 oxidized [2Fe-2S]-[ferredoxin] + H2O = (2E)-4-hydroxy-3-methylbut-2-enyl diphosphate + 2 reduced [2Fe-2S]-[ferredoxin] + 2 H(+). The catalysed reaction is dimethylallyl diphosphate + 2 oxidized [2Fe-2S]-[ferredoxin] + H2O = (2E)-4-hydroxy-3-methylbut-2-enyl diphosphate + 2 reduced [2Fe-2S]-[ferredoxin] + 2 H(+). It functions in the pathway isoprenoid biosynthesis; dimethylallyl diphosphate biosynthesis; dimethylallyl diphosphate from (2E)-4-hydroxy-3-methylbutenyl diphosphate: step 1/1. It participates in isoprenoid biosynthesis; isopentenyl diphosphate biosynthesis via DXP pathway; isopentenyl diphosphate from 1-deoxy-D-xylulose 5-phosphate: step 6/6. Functionally, catalyzes the conversion of 1-hydroxy-2-methyl-2-(E)-butenyl 4-diphosphate (HMBPP) into a mixture of isopentenyl diphosphate (IPP) and dimethylallyl diphosphate (DMAPP). Acts in the terminal step of the DOXP/MEP pathway for isoprenoid precursor biosynthesis. This chain is 4-hydroxy-3-methylbut-2-enyl diphosphate reductase, found in Methylibium petroleiphilum (strain ATCC BAA-1232 / LMG 22953 / PM1).